The following is a 233-amino-acid chain: Biosynthetic peptidoglycan transglycosylase (233 aa).

A helical membrane pass occupies residues 8–28 (LIALPVGIFIFFNAYVYGNII).

This sequence belongs to the glycosyltransferase 51 family.

It localises to the cell inner membrane. The enzyme catalyses [GlcNAc-(1-&gt;4)-Mur2Ac(oyl-L-Ala-gamma-D-Glu-L-Lys-D-Ala-D-Ala)](n)-di-trans,octa-cis-undecaprenyl diphosphate + beta-D-GlcNAc-(1-&gt;4)-Mur2Ac(oyl-L-Ala-gamma-D-Glu-L-Lys-D-Ala-D-Ala)-di-trans,octa-cis-undecaprenyl diphosphate = [GlcNAc-(1-&gt;4)-Mur2Ac(oyl-L-Ala-gamma-D-Glu-L-Lys-D-Ala-D-Ala)](n+1)-di-trans,octa-cis-undecaprenyl diphosphate + di-trans,octa-cis-undecaprenyl diphosphate + H(+). It functions in the pathway cell wall biogenesis; peptidoglycan biosynthesis. Peptidoglycan polymerase that catalyzes glycan chain elongation from lipid-linked precursors. The sequence is that of Biosynthetic peptidoglycan transglycosylase from Neisseria meningitidis serogroup C (strain 053442).